The primary structure comprises 477 residues: Adenylyl cyclase-associated protein 2 (477 aa).

At Ala2 the chain carries N-acetylalanine. 2 disordered regions span residues 224-262 (SILS…PSRS) and 274-324 (ITKG…HAPV). The span at 231 to 248 (GLPPPPPPPPPPGPPPPF) shows a compositional bias: pro residues. A compositionally biased stretch (low complexity) spans 300-318 (RSPTKTRTPSPTSSKSNSP). A phosphoserine mark is found at Ser301 and Ser309. In terms of domain architecture, C-CAP/cofactor C-like spans 318–455 (PQKHAPVLEL…QGDDYREFPI (138 aa)).

The protein belongs to the CAP family. As to expression, found at relatively high levels in testes, at moderate levels in brain, heart and skeletal muscle, at lower levels in lung, skin, kidney and small intestine, and is undetectable in liver or spleen.

Its subcellular location is the cell membrane. In terms of biological role, involved in the regulation of actin polymerization. In Rattus norvegicus (Rat), this protein is Adenylyl cyclase-associated protein 2 (Cap2).